The following is a 381-amino-acid chain: L-lactate dehydrogenase (381 aa).

Residues 1–380 (MIISSTNDYR…TRDALVDLSK (380 aa)) enclose the FMN hydroxy acid dehydrogenase domain. A substrate-binding site is contributed by Tyr-24. FMN is bound by residues Ser-106 and Gln-127. Tyr-129 is a substrate binding site. Thr-155 contributes to the FMN binding site. Arg-164 serves as a coordination point for substrate. An FMN-binding site is contributed by Lys-251. His-275 functions as the Proton acceptor in the catalytic mechanism. Arg-278 contacts substrate. 306–330 (DSGIRNGLDIVRMLALGADATMLGR) provides a ligand contact to FMN.

This sequence belongs to the FMN-dependent alpha-hydroxy acid dehydrogenase family. It depends on FMN as a cofactor.

The protein localises to the cell inner membrane. It carries out the reaction (S)-lactate + A = pyruvate + AH2. Functionally, catalyzes the conversion of L-lactate to pyruvate. Is coupled to the respiratory chain. This is L-lactate dehydrogenase from Actinobacillus pleuropneumoniae serotype 3 (strain JL03).